Here is a 600-residue protein sequence, read N- to C-terminus: Elongation factor 4 (600 aa).

One can recognise a tr-type G domain in the interval 4 to 186; that stretch reads SKIRNFSIIA…AIVEKIPSPS (183 aa). GTP-binding positions include 16–21 and 133–136; these read DHGKST and NKID.

This sequence belongs to the TRAFAC class translation factor GTPase superfamily. Classic translation factor GTPase family. LepA subfamily.

The protein localises to the cell membrane. It carries out the reaction GTP + H2O = GDP + phosphate + H(+). Required for accurate and efficient protein synthesis under certain stress conditions. May act as a fidelity factor of the translation reaction, by catalyzing a one-codon backward translocation of tRNAs on improperly translocated ribosomes. Back-translocation proceeds from a post-translocation (POST) complex to a pre-translocation (PRE) complex, thus giving elongation factor G a second chance to translocate the tRNAs correctly. Binds to ribosomes in a GTP-dependent manner. The protein is Elongation factor 4 of Mycoplasma mycoides subsp. mycoides SC (strain CCUG 32753 / NCTC 10114 / PG1).